A 94-amino-acid polypeptide reads, in one-letter code: Serine protease inhibitor Kazal-type 13 (94 aa).

Positions 1–23 are cleaved as a signal peptide; that stretch reads MAAFPHKIIFFLVCSTLTHVAFS. The 62-residue stretch at 33–94 folds into the Kazal-like domain; sequence RWPKPRCKMY…IKFEKYGKCD (62 aa). Disulfide bonds link Cys-39–Cys-75, Cys-53–Cys-72, and Cys-61–Cys-93. A glycan (N-linked (GlcNAc...) asparagine) is linked at Asn-55.

Its subcellular location is the secreted. Functionally, may be a serine protease inhibitor. Essential for sperm maturation and fertility. Inhibits sperm acrosome reaction, protecting sperm from premature reaction. The chain is Serine protease inhibitor Kazal-type 13 (SPINK13) from Homo sapiens (Human).